A 672-amino-acid polypeptide reads, in one-letter code: DNA ligase (672 aa).

Residues 30 to 34 (DAVYD), 79 to 80 (SL), and Glu-110 contribute to the NAD(+) site. Lys-112 serves as the catalytic N6-AMP-lysine intermediate. The NAD(+) site is built by Arg-133, Glu-170, Lys-287, and Lys-311. Zn(2+) contacts are provided by Cys-405, Cys-408, Cys-423, and Cys-429. The 83-residue stretch at 590 to 672 (ADELPLSGKT…IALLTEHGAI (83 aa)) folds into the BRCT domain.

This sequence belongs to the NAD-dependent DNA ligase family. LigA subfamily. The cofactor is Mg(2+). It depends on Mn(2+) as a cofactor.

It catalyses the reaction NAD(+) + (deoxyribonucleotide)n-3'-hydroxyl + 5'-phospho-(deoxyribonucleotide)m = (deoxyribonucleotide)n+m + AMP + beta-nicotinamide D-nucleotide.. Functionally, DNA ligase that catalyzes the formation of phosphodiester linkages between 5'-phosphoryl and 3'-hydroxyl groups in double-stranded DNA using NAD as a coenzyme and as the energy source for the reaction. It is essential for DNA replication and repair of damaged DNA. This Marinomonas sp. (strain MWYL1) protein is DNA ligase.